The sequence spans 805 residues: Zinc finger X-chromosomal protein (805 aa).

Residue Ser274 is modified to Phosphoserine. 13 C2H2-type zinc fingers span residues Tyr425–His447, Tyr456–His478, Ile488–His510, His519–His542, His548–His570, Tyr576–His599, Phe605–His627, His633–His656, His662–His684, His690–His713, Phe719–His741, Tyr747–His770, and His776–His798.

Belongs to the krueppel C2H2-type zinc-finger protein family. ZFX/ZFY subfamily.

It is found in the nucleus. Functionally, probable transcriptional activator. In Homo sapiens (Human), this protein is Zinc finger X-chromosomal protein (ZFX).